The chain runs to 24 residues: Coenzyme PQQ synthesis protein A (24 aa).

The pyrroloquinoline quinone (Glu-Tyr) cross-link spans 16-20 (EVTMY).

The protein belongs to the PqqA family.

The protein operates within cofactor biosynthesis; pyrroloquinoline quinone biosynthesis. Its function is as follows. Required for coenzyme pyrroloquinoline quinone (PQQ) biosynthesis. PQQ is probably formed by cross-linking a specific glutamate to a specific tyrosine residue and excising these residues from the peptide. This is Coenzyme PQQ synthesis protein A from Acinetobacter baumannii (strain SDF).